We begin with the raw amino-acid sequence, 552 residues long: uncharacterized protein (552 aa).

Residues 1-59 (MPLEKTNTHDSTATVEDQEATDNPMHLTQSRMLDLAGNPNRTTSRQSETLFPNGVDLNY) are disordered. The span at 39–50 (PNRTTSRQSETL) shows a compositional bias: polar residues. The next 12 helical transmembrane spans lie at 116 to 136 (ITIV…VIAG), 158 to 178 (LMVV…EMIG), 181 to 201 (IVYL…ALAP), 203 to 223 (IACL…PLTL), 238 to 258 (GLAI…GPLV), 271 to 291 (WIFW…LPVP), 345 to 365 (ILVC…GYFF), 383 to 403 (GLMF…TPFL), 424 to 444 (LVGM…FAWT), 450 to 470 (IWIG…LFYF), 484 to 506 (CASA…PLFI), and 519 to 539 (FFLL…FYLF).

This sequence belongs to the major facilitator superfamily.

Its subcellular location is the membrane. This is an uncharacterized protein from Schizosaccharomyces pombe (strain 972 / ATCC 24843) (Fission yeast).